Reading from the N-terminus, the 458-residue chain is UDP-N-acetylmuramoylalanine--D-glutamate ligase (458 aa).

Residue Gly-124–Thr-130 coordinates ATP.

It belongs to the MurCDEF family.

The protein resides in the cytoplasm. The catalysed reaction is UDP-N-acetyl-alpha-D-muramoyl-L-alanine + D-glutamate + ATP = UDP-N-acetyl-alpha-D-muramoyl-L-alanyl-D-glutamate + ADP + phosphate + H(+). Its pathway is cell wall biogenesis; peptidoglycan biosynthesis. Functionally, cell wall formation. Catalyzes the addition of glutamate to the nucleotide precursor UDP-N-acetylmuramoyl-L-alanine (UMA). This Clostridium botulinum (strain ATCC 19397 / Type A) protein is UDP-N-acetylmuramoylalanine--D-glutamate ligase.